Here is a 302-residue protein sequence, read N- to C-terminus: Probable 2-(5''-triphosphoribosyl)-3'-dephosphocoenzyme-A synthase 1 (302 aa).

Belongs to the CitG/MdcB family.

It carries out the reaction 3'-dephospho-CoA + ATP = 2'-(5''-triphospho-alpha-D-ribosyl)-3'-dephospho-CoA + adenine. This Salmonella paratyphi A (strain ATCC 9150 / SARB42) protein is Probable 2-(5''-triphosphoribosyl)-3'-dephosphocoenzyme-A synthase 1.